Reading from the N-terminus, the 213-residue chain is Urease accessory protein UreG (213 aa).

14-21 (GPVGSGKT) contacts GTP.

The protein belongs to the SIMIBI class G3E GTPase family. UreG subfamily. In terms of assembly, homodimer. UreD, UreF and UreG form a complex that acts as a GTP-hydrolysis-dependent molecular chaperone, activating the urease apoprotein by helping to assemble the nickel containing metallocenter of UreC. The UreE protein probably delivers the nickel.

It is found in the cytoplasm. Facilitates the functional incorporation of the urease nickel metallocenter. This process requires GTP hydrolysis, probably effectuated by UreG. This is Urease accessory protein UreG from Mesorhizobium japonicum (strain LMG 29417 / CECT 9101 / MAFF 303099) (Mesorhizobium loti (strain MAFF 303099)).